A 1741-amino-acid chain; its full sequence is DNA-directed RNA polymerase III subunit RPC1 (1741 aa).

Cys-79, Cys-82, Cys-89, His-92, Cys-119, Cys-122, and Cys-160 together coordinate Zn(2+). Mg(2+)-binding residues include Asp-722, Asp-724, and Asp-726. The bridging helix stretch occupies residues 1099 to 1111 (PFEFLAHARAGRD). Residues 1719–1741 (RHANKRSWSRGKERHASLKPKNR) are disordered.

Belongs to the RNA polymerase beta' chain family. In terms of assembly, component of the RNA polymerase III (Pol III) complex consisting of 17 subunits.

It localises to the nucleus. The catalysed reaction is RNA(n) + a ribonucleoside 5'-triphosphate = RNA(n+1) + diphosphate. Functionally, DNA-dependent RNA polymerase catalyzes the transcription of DNA into RNA using the four ribonucleoside triphosphates as substrates. Largest and catalytic core component of RNA polymerase III which synthesizes small RNAs, such as 5S rRNA and tRNAs. Forms the polymerase active center together with the second largest subunit. A single-stranded DNA template strand of the promoter is positioned within the central active site cleft of Pol III. A bridging helix emanates from RPC1 and crosses the cleft near the catalytic site and is thought to promote translocation of Pol III by acting as a ratchet that moves the RNA-DNA hybrid through the active site by switching from straight to bent conformations at each step of nucleotide addition. The sequence is that of DNA-directed RNA polymerase III subunit RPC1 (RPOA3) from Giardia intestinalis (Giardia lamblia).